The primary structure comprises 605 residues: Probable potassium transport system protein Kup 1 (605 aa).

Transmembrane regions (helical) follow at residues 16 to 36, 46 to 66, 97 to 117, 138 to 158, 166 to 186, 212 to 232, 248 to 268, 287 to 307, 339 to 359, 368 to 388, 397 to 417, and 418 to 438; these read ALGLVFGDIGTSPIYTLTVIF, VFGILSLVFWTMTILVTMEYA, VAFAGFLSFVGVSLLLGDGVI, GLSTGTLVAIAAAIAIGLFSV, VAGAFGPIMAVWFSTLAVTGV, GLAGYFVLSEVILCSTGGEAL, WYFVFMALYLNYLGQGVFAIT, LYIPFLILTIMATIIASQSII, IYLGAVNWSLMVAVILVMLLF, AYGMAVTGSMTITGIMMIIVF, ALVALVITLIDAAYLLSTFSK, and IPHGAYWSLILASIPFVTIII.

The protein belongs to the HAK/KUP transporter (TC 2.A.72) family.

It is found in the cell inner membrane. The catalysed reaction is K(+)(in) + H(+)(in) = K(+)(out) + H(+)(out). Its function is as follows. Transport of potassium into the cell. Likely operates as a K(+):H(+) symporter. The polypeptide is Probable potassium transport system protein Kup 1 (Geobacter metallireducens (strain ATCC 53774 / DSM 7210 / GS-15)).